Here is a 493-residue protein sequence, read N- to C-terminus: MQEGTDPYGEIEISFGYQCNNKKIGIPEDKIADGREVLGGFRLQKTSSFSCLSGAALSGNPTLANTNICNGVIGSEILPSLDSPKSFRKVPSSPALSKLDILSPSLHGSMVSLSCSSSTSPSPPEPESCYLTSMSSPSSVNEGFLLSAMEVQVAGGAAGEDRVQAVCSEENGWLFCAIYDGFNGRDAADFLACTLYESIVFHLQLLDRQMKQTKSDDDGEKLELLSNISNVDYSSTDLFRQGVLDCLNRALFQAETDFLRMVEQEMEERPDLVSVGSCVLVTLLVGKDLYVLNLGDSRAVLATYNGNKKLQAVQLTEDHTVDNEVEEARLLSEHLDDPKIVIGGKIKGKLKVTRALGVGYLKKEKLNDALMGILRVRNLLSPPYVSVEPSMRVHKITESDHFVIVASDGLFDFFSNEEAIGLVHSFVSSNPSGDPAKFLLERLVAKAAARAGFTLEELTNVPAGRRRRYHDDVTIMVITLGTDQRTSKASTFV.

The PPM-type phosphatase domain occupies 145–480; that stretch reads LLSAMEVQVA…DDVTIMVITL (336 aa). Residues Asp180, Gly181, Asp408, and Asp471 each coordinate Mn(2+).

This sequence belongs to the PP2C family. It depends on Mg(2+) as a cofactor. Mn(2+) serves as cofactor.

The enzyme catalyses O-phospho-L-seryl-[protein] + H2O = L-seryl-[protein] + phosphate. It catalyses the reaction O-phospho-L-threonyl-[protein] + H2O = L-threonyl-[protein] + phosphate. This chain is Probable protein phosphatase 2C 40, found in Arabidopsis thaliana (Mouse-ear cress).